The primary structure comprises 340 residues: GTP 3',8-cyclase (340 aa).

The region spanning 8–230 (KLGRPIRDLR…EQHFEIDPVE (223 aa)) is the Radical SAM core domain. Position 17 (Arg17) interacts with GTP. [4Fe-4S] cluster is bound by residues Cys24 and Cys28. Tyr30 contacts S-adenosyl-L-methionine. Cys31 lines the [4Fe-4S] cluster pocket. Arg71 lines the GTP pocket. Gly75 contacts S-adenosyl-L-methionine. A GTP-binding site is contributed by Thr102. Ser126 contacts S-adenosyl-L-methionine. GTP is bound at residue Lys163. Met197 is a binding site for S-adenosyl-L-methionine. Residues Cys261 and Cys264 each contribute to the [4Fe-4S] cluster site. 266 to 268 (RAR) lines the GTP pocket. Cys278 contributes to the [4Fe-4S] cluster binding site.

It belongs to the radical SAM superfamily. MoaA family. Monomer and homodimer. The cofactor is [4Fe-4S] cluster.

The enzyme catalyses GTP + AH2 + S-adenosyl-L-methionine = (8S)-3',8-cyclo-7,8-dihydroguanosine 5'-triphosphate + 5'-deoxyadenosine + L-methionine + A + H(+). It functions in the pathway cofactor biosynthesis; molybdopterin biosynthesis. Catalyzes the cyclization of GTP to (8S)-3',8-cyclo-7,8-dihydroguanosine 5'-triphosphate. This Staphylococcus aureus (strain bovine RF122 / ET3-1) protein is GTP 3',8-cyclase.